Consider the following 156-residue polypeptide: Low molecular weight phosphotyrosine protein phosphatase (156 aa).

C11 serves as the catalytic Nucleophile. Residue R17 is part of the active site. Residue D128 is the Proton donor of the active site.

Belongs to the low molecular weight phosphotyrosine protein phosphatase family.

The protein resides in the cytoplasm. It catalyses the reaction O-phospho-L-tyrosyl-[protein] + H2O = L-tyrosyl-[protein] + phosphate. The enzyme catalyses a phosphate monoester + H2O = an alcohol + phosphate. Functionally, may contribute to dephosphorylation of 'Tyr-15' of cdc2. This Schizosaccharomyces pombe (strain 972 / ATCC 24843) (Fission yeast) protein is Low molecular weight phosphotyrosine protein phosphatase (stp1).